We begin with the raw amino-acid sequence, 550 residues long: Crystal protein (550 aa).

A signal peptide spans 1–19; it reads MNKIIILLIILLSFDIISA. Cys91 and Cys111 are joined by a disulfide. N-linked (GlcNAc...) asparagine glycosylation occurs at Asn156. Ser215 functions as the Acyl-ester intermediate in the catalytic mechanism. A disulfide bridge connects residues Cys267 and Cys274. Active-site charge relay system residues include Glu340 and His443. An N-linked (GlcNAc...) asparagine glycan is attached at Asn506.

This sequence belongs to the type-B carboxylesterase/lipase family.

The protein resides in the cytoplasmic vesicle. The protein localises to the esterosome membrane. The polypeptide is Crystal protein (cryS) (Dictyostelium discoideum (Social amoeba)).